The chain runs to 375 residues: Digeranylgeranylglycerophospholipid reductase 1 (375 aa).

Residues Ala-13, Glu-32, Cys-43, Ala-44, Gly-46, Arg-92, Ala-116, Asp-275, Gly-287, and Leu-288 each contribute to the FAD site. Gly-367 provides a ligand contact to a 2,3-bis-O-(geranylgeranyl)-sn-glycerol 1-phospholipid.

The protein belongs to the geranylgeranyl reductase family. DGGGPL reductase subfamily. It depends on FAD as a cofactor.

The catalysed reaction is a 2,3-bis-O-phytanyl-sn-glycerol 1-phospholipid + 8 A = a 2,3-bis-O-(geranylgeranyl)-sn-glycerol 1-phospholipid + 8 AH2. It catalyses the reaction 2,3-bis-O-(phytanyl)-sn-glycerol 1-phosphate + 8 A = 2,3-bis-O-(geranylgeranyl)-sn-glycerol 1-phosphate + 8 AH2. It carries out the reaction CDP-2,3-bis-O-(geranylgeranyl)-sn-glycerol + 8 AH2 = CDP-2,3-bis-O-(phytanyl)-sn-glycerol + 8 A. The enzyme catalyses archaetidylserine + 8 AH2 = 2,3-bis-O-phytanyl-sn-glycero-3-phospho-L-serine + 8 A. Its pathway is membrane lipid metabolism; glycerophospholipid metabolism. Its function is as follows. Is involved in the reduction of 2,3-digeranylgeranylglycerophospholipids (unsaturated archaeols) into 2,3-diphytanylglycerophospholipids (saturated archaeols) in the biosynthesis of archaeal membrane lipids. Catalyzes the formation of archaetidic acid (2,3-di-O-phytanyl-sn-glyceryl phosphate) from 2,3-di-O-geranylgeranylglyceryl phosphate (DGGGP) via the hydrogenation of each double bond of the isoprenoid chains. Is also probably able to reduce double bonds of geranyl groups in CDP-2,3-bis-O-(geranylgeranyl)-sn-glycerol and archaetidylserine, thus acting at various stages in the biosynthesis of archaeal membrane lipids. The chain is Digeranylgeranylglycerophospholipid reductase 1 from Methanopyrus kandleri (strain AV19 / DSM 6324 / JCM 9639 / NBRC 100938).